A 436-amino-acid chain; its full sequence is GTPase Der (436 aa).

EngA-type G domains are found at residues 4–167 (PTVA…PVEE) and 175–351 (IRFS…ESQN). GTP contacts are provided by residues 10-17 (GRPNVGKS), 57-61 (DTGGI), 119-122 (NKVD), 181-188 (GRPNVGKS), 229-233 (DTAGM), and 294-297 (NKWD). Residues 352–436 (KRIPSAVLND…PIHLIARKRK (85 aa)) form the KH-like domain.

Belongs to the TRAFAC class TrmE-Era-EngA-EngB-Septin-like GTPase superfamily. EngA (Der) GTPase family. As to quaternary structure, associates with the 50S ribosomal subunit.

Functionally, GTPase that plays an essential role in the late steps of ribosome biogenesis. The sequence is that of GTPase Der from Streptococcus pyogenes serotype M2 (strain MGAS10270).